We begin with the raw amino-acid sequence, 849 residues long: Disks large homolog 3 (849 aa).

The segment at 32 to 101 (DWQVPDPYGP…GKSTPKLNGS (70 aa)) is disordered. Residues 41-53 (PSGGNGASSGYGG) are compositionally biased toward gly residues. Polar residues predominate over residues 57 to 69 (QTLPSQAGATPTP). 3 PDZ domains span residues 149–235 (EIVL…VRRR), 244–330 (EVNL…VAKP), and 404–484 (KIIL…AQYR). Ser157 is subject to Phosphoserine. Residues 519–589 (KRSLYVRALF…PSKKRVEKKE (71 aa)) form the SH3 domain. The Guanylate kinase-like domain maps to 659–834 (ARPVIILGPM…IYNKIKQIIE (176 aa)). The residue at position 705 (Tyr705) is a Phosphotyrosine.

Belongs to the MAGUK family. In terms of assembly, interacts through its PDZ domains with NETO1, GRIN2B, SYNGAP1 and APC. Interacts through its first two PDZ domains with ERBB4. Interacts through its third PDZ domain with NLGN1, and probably with NLGN2 and NLGN3. Interacts through its guanylate kinase-like domain with DLGAP1, DLGAP2, DLGAP3 and DLGAP4. Interacts with FRMPD4 (via C-terminus). Interacts with LRFN1, LRFN2 and LRFN4. Interacts with FLTP. Interacts with GPR85. Interacts with DGKI (via PDZ-binding motif).

Its function is as follows. Required for learning most likely through its role in synaptic plasticity following NMDA receptor signaling. The chain is Disks large homolog 3 (Dlg3) from Mus musculus (Mouse).